Reading from the N-terminus, the 310-residue chain is Thioredoxin reductase (310 aa).

35-42 (ERGMPGGQ) is an FAD binding site. The cysteines at positions 134 and 137 are disulfide-linked. 277–286 (DVRDKGLRQI) is a binding site for FAD.

The protein belongs to the class-II pyridine nucleotide-disulfide oxidoreductase family. Homodimer. FAD serves as cofactor.

The protein resides in the cytoplasm. It catalyses the reaction [thioredoxin]-dithiol + NADP(+) = [thioredoxin]-disulfide + NADPH + H(+). The chain is Thioredoxin reductase (trxB) from Staphylococcus epidermidis (strain ATCC 35984 / DSM 28319 / BCRC 17069 / CCUG 31568 / BM 3577 / RP62A).